Consider the following 316-residue polypeptide: Alkaline ceramidase YPC1 (316 aa).

Residues 1-36 (MGIFRWNYPESSVPGVWGETTSTIDWCEENYVVSPY) are Lumenal-facing. The cysteines at positions 27 and 219 are disulfide-linked. An intramembrane segment occupies 37–57 (IAEWSNTLTNSVFILSAIYTT). The Lumenal portion of the chain corresponds to 58 to 68 (YSAYKNKLEKR). An intramembrane segment occupies 69 to 89 (FLLIGFGYGLVGVGSWLFHMT). Residues 90–93 (LKYR) lie on the Lumenal side of the membrane. The chain crosses the membrane as a helical span at residues 94 to 114 (FQLLDELPMIYAMCIPTWSLV). At 115–135 (CEAKEALLNGDNHKKVPLFEQ) the chain is on the cytoplasmic side. Residues 136-156 (IFIGVIIGLAVTTASILYVIY) form a helical membrane-spanning segment. Residues 157 to 160 (KNVD) are Lumenal-facing. Residues 161–181 (IHQILFGVQIVVVAATAGSLT) lie within the membrane without spanning it. Over 182-195 (YRYVHDPLAKRNLK) the chain is Lumenal. The stretch at 196-216 (ASMALGAILFLSGYISWLLDI) is an intramembrane region. Residues 217–228 (HYCSFWVHVRRS) lie on the Lumenal side of the membrane. Residues 229-249 (ILALPLGVLLEPHGWWHILTG) traverse the membrane as a helical segment. Topologically, residues 250–316 (MGIYFYIVSL…DQSIEVKKEK (67 aa)) are cytoplasmic.

This sequence belongs to the alkaline ceramidase family.

It is found in the endoplasmic reticulum membrane. The enzyme catalyses N-hexanoyl-sphinganine + H2O = hexanoate + sphinganine. It carries out the reaction sphinganine + hexadecanoate = N-hexadecanoylsphinganine + H2O. The catalysed reaction is N-hexadecanoyl-(4R)-hydroxysphinganine + H2O = (4R)-hydroxysphinganine + hexadecanoate. It catalyses the reaction N-hexadecanoylsphing-4-enine + H2O = sphing-4-enine + hexadecanoate. The enzyme catalyses an N-acyl-(4R)-4-hydroxysphinganine + H2O = (4R)-hydroxysphinganine + a fatty acid. In terms of biological role, alkaline ceramidase that hydrolyzes phytoceramide and also dihydroceramide into phytosphingosine or dihydrosphingosine. Prefers phytoceramide. Also has reverse activity as acyl-CoA-independent ceramide synthase, catalyzing synthesis of phytoceramide and dihydroceramide from palmitic acid and phytosphingosine or dihydrosphingosine. Is not responsible for the breakdown of unsaturated ceramide. Preferentially uses very long chain fatty acids (C-24 and C-26) in vivo compared to C-16 in vitro. This Saccharomyces cerevisiae (strain ATCC 204508 / S288c) (Baker's yeast) protein is Alkaline ceramidase YPC1 (YPC1).